Here is a 251-residue protein sequence, read N- to C-terminus: Ribonuclease PH (251 aa).

Phosphate contacts are provided by residues R90 and 128–130 (GTR).

The protein belongs to the RNase PH family. Homohexameric ring arranged as a trimer of dimers.

The enzyme catalyses tRNA(n+1) + phosphate = tRNA(n) + a ribonucleoside 5'-diphosphate. Functionally, phosphorolytic 3'-5' exoribonuclease that plays an important role in tRNA 3'-end maturation. Removes nucleotide residues following the 3'-CCA terminus of tRNAs; can also add nucleotides to the ends of RNA molecules by using nucleoside diphosphates as substrates, but this may not be physiologically important. Probably plays a role in initiation of 16S rRNA degradation (leading to ribosome degradation) during starvation. The polypeptide is Ribonuclease PH (Leifsonia xyli subsp. xyli (strain CTCB07)).